Reading from the N-terminus, the 801-residue chain is Protocadherin beta-8 (801 aa).

An N-terminal signal peptide occupies residues 1-29 (MEASGKLICRQRQVLFSFLLLGLSLAGAA). Topologically, residues 30 to 691 (EPRSYSVVEE…GQADSLTVYL (662 aa)) are extracellular. 5 consecutive Cadherin domains span residues 36–134 (VVEE…SPVF), 139–243 (MLVK…APEF), 248–348 (YRVQ…APEV), 353–452 (FTSP…APAF), and 457–562 (YTLF…SPFV). Cys-97 and Cys-103 are joined by a disulfide. N-linked (GlcNAc...) asparagine glycosylation is found at Asn-419 and Asn-437. Asn-568 carries N-linked (GlcNAc...) asparagine glycosylation. The Cadherin 6 domain occupies 569–672 (SSAPCTELVP…LVDGFSQPYL (104 aa)). A helical transmembrane segment spans residues 692-710 (VVALASVSSLFLFSVLLFV). At 711 to 801 (AVRLCRRSRA…NGFGFSLQLK (91 aa)) the chain is on the cytoplasmic side.

In terms of assembly, forms homodimers in trans (molecules expressed by two different cells). Forms promiscuous heterodimers in cis (at the plasma membrane of the same cell) with other protocadherins.

The protein localises to the cell membrane. Functionally, calcium-dependent cell-adhesion protein involved in cells self-recognition and non-self discrimination. Thereby, it is involved in the establishment and maintenance of specific neuronal connections in the brain. The protein is Protocadherin beta-8 of Pan troglodytes (Chimpanzee).